The chain runs to 202 residues: Putative transposon Tn552 DNA-invertase bin3 (202 aa).

The 143-residue stretch at 1 to 143 (MIIGYARVSS…QGIQVAKEKG (143 aa)) folds into the Resolvase/invertase-type recombinase catalytic domain. Serine 9 (O-(5'-phospho-DNA)-serine intermediate) is an active-site residue.

The protein belongs to the site-specific recombinase resolvase family.

In terms of biological role, potential DNA invertase. In Staphylococcus aureus, this protein is Putative transposon Tn552 DNA-invertase bin3 (bin3).